We begin with the raw amino-acid sequence, 166 residues long: Large ribosomal subunit protein uL10 (166 aa).

Belongs to the universal ribosomal protein uL10 family. As to quaternary structure, part of the ribosomal stalk of the 50S ribosomal subunit. The N-terminus interacts with L11 and the large rRNA to form the base of the stalk. The C-terminus forms an elongated spine to which L12 dimers bind in a sequential fashion forming a multimeric L10(L12)X complex.

Its function is as follows. Forms part of the ribosomal stalk, playing a central role in the interaction of the ribosome with GTP-bound translation factors. The polypeptide is Large ribosomal subunit protein uL10 (Shewanella sediminis (strain HAW-EB3)).